The primary structure comprises 874 residues: Probable inorganic carbon transporter subunit DabA (874 aa).

Positions 398, 400, 580, and 595 each coordinate Zn(2+).

This sequence belongs to the inorganic carbon transporter (TC 9.A.2) DabA family. Forms a complex with DabB. Zn(2+) is required as a cofactor.

The protein localises to the cell membrane. Functionally, part of an energy-coupled inorganic carbon pump. This is Probable inorganic carbon transporter subunit DabA from Bacillus thuringiensis subsp. konkukian (strain 97-27).